A 293-amino-acid polypeptide reads, in one-letter code: Transcription initiation factor IIB 2 (293 aa).

Residues 1 to 31 form a TFIIB-type zinc finger; sequence MKCPYCKTDNAITYDVEKGMYVCTNCASVIE. Zn(2+)-binding residues include C3, C6, C23, and C26. Tandem repeats lie at residues 107-193 and 204-285.

Belongs to the TFIIB family.

Stabilizes TBP binding to an archaeal box-A promoter. Also responsible for recruiting RNA polymerase II to the pre-initiation complex (DNA-TBP-TFIIB). This is Transcription initiation factor IIB 2 from Saccharolobus solfataricus (strain ATCC 35092 / DSM 1617 / JCM 11322 / P2) (Sulfolobus solfataricus).